We begin with the raw amino-acid sequence, 380 residues long: Cytochrome b (380 aa).

4 consecutive transmembrane segments (helical) span residues 33–53, 77–98, 113–133, and 178–198; these read FGSL…FLAM, WLIR…YMHI, WNIG…GYVL, and FFAF…LHLL. Heme b contacts are provided by His83 and His97. Heme b contacts are provided by His182 and His196. Residue His201 participates in a ubiquinone binding. Transmembrane regions (helical) follow at residues 226-246, 288-308, 320-340, and 347-367; these read YKDL…ALFA, LGGV…PFLH, LTQM…WIGG, and FIII…VLFP.

It belongs to the cytochrome b family. As to quaternary structure, the cytochrome bc1 complex contains 3 respiratory subunits (MT-CYB, CYC1 and UQCRFS1), 2 core proteins (UQCRC1 and UQCRC2) and probably 6 low-molecular weight proteins. Heme b is required as a cofactor.

It localises to the mitochondrion inner membrane. Functionally, component of the ubiquinol-cytochrome c reductase complex (complex III or cytochrome b-c1 complex) that is part of the mitochondrial respiratory chain. The b-c1 complex mediates electron transfer from ubiquinol to cytochrome c. Contributes to the generation of a proton gradient across the mitochondrial membrane that is then used for ATP synthesis. The polypeptide is Cytochrome b (mt-cyb) (Gadus morhua (Atlantic cod)).